A 350-amino-acid chain; its full sequence is 2-oxoglutarate-dependent ethylene/succinate-forming enzyme (350 aa).

A Fe2OG dioxygenase domain is found at 166-286 (GWHHMRVLRF…RFACAYFHEP (121 aa)). Fe cation contacts are provided by histidine 189 and histidine 268.

It belongs to the iron/ascorbate-dependent oxidoreductase family. In terms of assembly, monomer. Requires Fe(2+) as cofactor.

The catalysed reaction is 2-oxoglutarate + O2 + 2 H(+) = ethene + 3 CO2 + H2O. The enzyme catalyses L-arginine + 2-oxoglutarate + O2 = guanidine + L-glutamate 5-semialdehyde + succinate + CO2. It participates in alkene biosynthesis; ethylene biosynthesis via 2-oxoglutarate. With respect to regulation, activated by catalase. Inhibited by chelating reagents such as EDTA and Tiron (4,5-dihydroxy-1,3-benzene disulphonic acid), and by DTNB (5,5'-dithio-bis-2-nitrobenzoate) and hydrogen peroxide. In terms of biological role, simultaneously catalyzes two reactions, namely formation of ethylene and of succinate from 2-oxoglutarate, with a molar ratio of 2:1. The sequence is that of 2-oxoglutarate-dependent ethylene/succinate-forming enzyme (efe) from Pseudomonas savastanoi pv. phaseolicola (Pseudomonas syringae pv. phaseolicola).